The chain runs to 248 residues: MVRLKKSFGQHLLVSEGVLKKIAEELNIEEGNTVVEVGGGTGNLTKVLLQHPLKKLYVIELDREMVENLKSIGDERLEVINEDASKFPFCSLGKELKVVGNLPYNVASLIIENTVYNKDCVPLAVFMVQKEVAEKLQGKKDTGWLSVFVRTFYDVNYVMTVPPRFFVPPPKVQSAVIKLVKNEKFPVKDLKNYKKFLTKIFQNRRKVLRKKIPEELLKEAGINPDARVEQLSLEDFFKLYRLIEDSGE.

The S-adenosyl-L-methionine site is built by H11, L13, G38, E60, D83, and N101.

Belongs to the class I-like SAM-binding methyltransferase superfamily. rRNA adenine N(6)-methyltransferase family. RsmA subfamily.

Its subcellular location is the cytoplasm. It catalyses the reaction adenosine(1518)/adenosine(1519) in 16S rRNA + 4 S-adenosyl-L-methionine = N(6)-dimethyladenosine(1518)/N(6)-dimethyladenosine(1519) in 16S rRNA + 4 S-adenosyl-L-homocysteine + 4 H(+). In terms of biological role, specifically dimethylates two adjacent adenosines (A1518 and A1519) in the loop of a conserved hairpin near the 3'-end of 16S rRNA in the 30S particle. May play a critical role in biogenesis of 30S subunits. This chain is Ribosomal RNA small subunit methyltransferase A, found in Aquifex aeolicus (strain VF5).